A 213-amino-acid chain; its full sequence is Transcription antitermination protein NusB (213 aa).

Belongs to the NusB family.

Involved in transcription antitermination. Required for transcription of ribosomal RNA (rRNA) genes. Binds specifically to the boxA antiterminator sequence of the ribosomal RNA (rrn) operons. The chain is Transcription antitermination protein NusB from Picosynechococcus sp. (strain ATCC 27264 / PCC 7002 / PR-6) (Agmenellum quadruplicatum).